The sequence spans 420 residues: Bone morphogenetic protein 2 (420 aa).

An N-terminal signal peptide occupies residues 1-23 (MVAVVRSLMVLLLAQVLLEGATG). Residues 24–303 (LIPEVGRRRY…DSVLHTREKR (280 aa)) constitute a propeptide that is removed on maturation. N138, N167, N168, N172, and N362 each carry an N-linked (GlcNAc...) asparagine glycan. 3 cysteine pairs are disulfide-bonded: C320–C385, C349–C417, and C353–C419.

This sequence belongs to the TGF-beta family. In terms of assembly, homodimer; disulfide-linked.

The protein localises to the secreted. In terms of biological role, induces cartilage and bone formation. This Tetraodon nigroviridis (Spotted green pufferfish) protein is Bone morphogenetic protein 2 (bmp2).